The following is a 198-amino-acid chain: Probable GTP-binding protein EngB (198 aa).

The 174-residue stretch at 22 to 195 (DLPEIALAGR…WKAIHKFTKT (174 aa)) folds into the EngB-type G domain. Residues 30 to 37 (GRSNVGKS), 57 to 61 (GKTQT), 75 to 78 (DVPG), 142 to 145 (TKAD), and 174 to 176 (FSS) contribute to the GTP site. Mg(2+) contacts are provided by serine 37 and threonine 59.

Belongs to the TRAFAC class TrmE-Era-EngA-EngB-Septin-like GTPase superfamily. EngB GTPase family. The cofactor is Mg(2+).

Its function is as follows. Necessary for normal cell division and for the maintenance of normal septation. This chain is Probable GTP-binding protein EngB, found in Bacillus cytotoxicus (strain DSM 22905 / CIP 110041 / 391-98 / NVH 391-98).